The following is a 175-amino-acid chain: NADH dehydrogenase [ubiquinone] iron-sulfur protein 4, mitochondrial (175 aa).

A mitochondrion-targeting transit peptide spans 1–42 (MAAVSMSVALRQALWGRRVATVAAVSVSKVSTRSLSTSTWRL). A disordered region spans residues 149 to 175 (ERKVPKPKSKSYGANFSWNKRTRVSTK). Ser-173 carries the post-translational modification Phosphoserine.

This sequence belongs to the complex I NDUFS4 subunit family. Mammalian complex I is composed of 45 different subunits. This is a component of the iron-sulfur (IP) fragment of the enzyme. Interacts with BCAP31 and TOMM40; the interaction mediates its translocation to the mitochondria; the interaction with BCAP31 is direct. Post-translationally, phosphorylated.

The protein localises to the mitochondrion inner membrane. In terms of biological role, accessory subunit of the mitochondrial membrane respiratory chain NADH dehydrogenase (Complex I), that is believed not to be involved in catalysis. Complex I functions in the transfer of electrons from NADH to the respiratory chain. The immediate electron acceptor for the enzyme is believed to be ubiquinone. This chain is NADH dehydrogenase [ubiquinone] iron-sulfur protein 4, mitochondrial (NDUFS4), found in Bos taurus (Bovine).